The primary structure comprises 483 residues: Probable cytochrome P450 517A1 (483 aa).

The chain crosses the membrane as a helical span at residues 1-21 (MEIINVFLFLIILFLVKDFVK). C429 contacts heme.

Belongs to the cytochrome P450 family. Heme serves as cofactor.

The protein localises to the membrane. The chain is Probable cytochrome P450 517A1 (cyp517A1) from Dictyostelium discoideum (Social amoeba).